The primary structure comprises 56 residues: UPF0434 protein WIGBR2520 (56 aa).

Belongs to the UPF0434 family.

The polypeptide is UPF0434 protein WIGBR2520 (Wigglesworthia glossinidia brevipalpis).